The chain runs to 601 residues: Tubulin polyglutamylase ttll-4 (601 aa).

The segment covering Met1–Thr18 has biased composition (polar residues). The tract at residues Met1–Gln37 is disordered. Residues Gln138–Ser476 form the TTL domain. ATP contacts are provided by residues Lys254, Arg260 to Gly261, Gln282 to Ile285, and Lys295 to Asp297. Arg260 contacts a protein. An L-glutamate-binding site is contributed by Arg321. Thr342–Asn343 provides a ligand contact to ATP. L-glutamate is bound by residues Tyr344, Ser345, and Lys362. Residues Asp422, Glu435, and Asn437 each contribute to the Mg(2+) site. Residue Lys453 coordinates L-glutamate.

This sequence belongs to the tubulin--tyrosine ligase family. Mg(2+) serves as cofactor. As to expression, expressed in many sensory neurons in amphid.

The catalysed reaction is L-glutamyl-[protein] + L-glutamate + ATP = gamma-L-glutamyl-L-glutamyl-[protein] + ADP + phosphate + H(+). Functionally, monoglutamylase which modifies tubulin, adding a single glutamate on the gamma-carboxyl group of specific glutamate residues of target proteins. Involved in the side-chain initiation step of the polyglutamylation reaction but not in the elongation step. Preferentially modifies beta-tail tubulin over the alpha-tubulin. Involved in side-chain glutamylation of tubulin in sensory cilia. Together with ttll-5 and ttll-11, required for male mating. The protein is Tubulin polyglutamylase ttll-4 of Caenorhabditis elegans.